Reading from the N-terminus, the 592-residue chain is Protein kinase C zeta type (592 aa).

Positions 15–98 (RVRLKAHYGG…EVLIIHVFPS (84 aa)) constitute a PB1 domain. The interaction with SQSTM1 stretch occupies residues 79 to 145 (AFRLVCQGRD…KRFNRGAYCG (67 aa)). The Phorbol-ester/DAG-type zinc-finger motif lies at 130 to 180 (GHLFQAKRFNRGAYCGQCSERIWGLSRQGYRCINCKLLVHKRCHVLVPLTC). The Protein kinase domain maps to 252–518 (FDLIRVIGRG…FSDIKSHAFF (267 aa)). ATP-binding positions include 258-266 (IGRGSYAKV) and Lys-281. Residue Asp-376 is the Proton acceptor of the active site. Thr-410 carries the post-translational modification Phosphothreonine; by PDPK1 and PI3K. The AGC-kinase C-terminal domain occupies 519–590 (RSIDWDLLEK…INPLLLSAEE (72 aa)). Residue Thr-560 is modified to Phosphothreonine. Ser-591 is subject to Phosphoserine.

This sequence belongs to the protein kinase superfamily. AGC Ser/Thr protein kinase family. PKC subfamily. As to quaternary structure, interacts directly with SQSTM1. Forms a ternary complex with SQSTM1 and KCNAB2. Forms another ternary complex with SQSTM1 and GABRR3. Forms a complex with SQSTM1 and MAP2K5. Interacts with PARD6A, PARD6B and PARD6G. Part of a complex with PARD3, PARD6A or PARD6B or PARD6G and CDC42 or RAC1. Interacts with ADAP1/CENTA1. Interacts (via the protein kinase domain) with WWC1. Forms a tripartite complex with WWC1 and DDR1, but predominantly in the absence of collagen. Interacts with PDPK1 (via N-terminal region). Interacts with WDFY2 (via WD repeats 1-3). Interacts with VAMP2. Forms a complex with WDFY2 and VAMP2. Interacts with APPL1. Interacts with WWC1, WWC2 and WWC3. Post-translationally, CDH5 is required for its phosphorylation at Thr-410. Phosphorylated by protein kinase PDPK1; phosphorylation is inhibited by the apoptotic C-terminal cleavage product of PKN2. Phosphorylation at Thr-410 by PI3K activates the kinase. As to expression, isoform 1: In brain, highly expressed in cerebellar granule neurons and cerebellar astrocytes (at protein level). Expressed at low levels in testes, lung and kidney. Isoform 2: Specifically expressed in brain where it localizes to cerebellar granule neurons (at protein level).

The protein resides in the cytoplasm. It localises to the endosome. The protein localises to the cell junction. It is found in the membrane. It carries out the reaction L-seryl-[protein] + ATP = O-phospho-L-seryl-[protein] + ADP + H(+). The catalysed reaction is L-threonyl-[protein] + ATP = O-phospho-L-threonyl-[protein] + ADP + H(+). Atypical PKCs (PRKCI and PRKCZ) exhibit an elevated basal enzymatic activity (that may be due to the interaction with SMG1 or SQSTM1) and are not regulated by diacylglycerol, phosphatidylserine, phorbol esters or calcium ions. Two specific sites, Thr-410 (activation loop of the kinase domain) and Thr-560 (turn motif), need to be phosphorylated for its full activation. Phosphatidylinositol 3,4,5-trisphosphate might be a physiological activator. Isoform 2: Constitutively active. Functionally, calcium- and diacylglycerol-independent serine/threonine-protein kinase that functions in phosphatidylinositol 3-kinase (PI3K) pathway and mitogen-activated protein (MAP) kinase cascade, and is involved in NF-kappa-B activation, mitogenic signaling, cell proliferation, cell polarity, inflammatory response and maintenance of long-term potentiation (LTP). Upon lipopolysaccharide (LPS) treatment in macrophages, or following mitogenic stimuli, functions downstream of PI3K to activate MAP2K1/MEK1-MAPK1/ERK2 signaling cascade independently of RAF1 activation. Required for insulin-dependent activation of AKT3, but may function as an adapter rather than a direct activator. Upon insulin treatment may act as a downstream effector of PI3K and contribute to the activation of translocation of the glucose transporter SLC2A4/GLUT4 and subsequent glucose transport in adipocytes. In EGF-induced cells, binds and activates MAP2K5/MEK5-MAPK7/ERK5 independently of its kinase activity and can activate JUN promoter through MEF2C. Through binding with SQSTM1/p62, functions in interleukin-1 signaling and activation of NF-kappa-B with the specific adapters RIPK1 and TRAF6. Participates in TNF-dependent transactivation of NF-kappa-B by phosphorylating and activating IKBKB kinase, which in turn leads to the degradation of NF-kappa-B inhibitors. In migrating astrocytes, forms a cytoplasmic complex with PARD6A and is recruited by CDC42 to function in the establishment of cell polarity along with the microtubule motor and dynein. In association with FEZ1, stimulates neuronal differentiation in PC12 cells. In the inflammatory response, is required for the T-helper 2 (Th2) differentiation process, including interleukin production, efficient activation of JAK1 and the subsequent phosphorylation and nuclear translocation of STAT6. May be involved in development of allergic airway inflammation (asthma), a process dependent on Th2 immune response. In the NF-kappa-B-mediated inflammatory response, can relieve SETD6-dependent repression of NF-kappa-B target genes by phosphorylating the RELA subunit at 'Ser-311'. Phosphorylates VAMP2 in vitro. Phosphorylates and activates LRRK1, which phosphorylates RAB proteins involved in intracellular trafficking. Its function is as follows. Involved in late synaptic long term potentiation phase in CA1 hippocampal cells and long term memory maintenance. This chain is Protein kinase C zeta type (Prkcz), found in Mus musculus (Mouse).